Consider the following 207-residue polypeptide: Ribosomal RNA small subunit methyltransferase G (207 aa).

S-adenosyl-L-methionine contacts are provided by residues Gly73, Leu78, 124–125 (VE), and Arg139.

The protein belongs to the methyltransferase superfamily. RNA methyltransferase RsmG family.

The protein localises to the cytoplasm. It carries out the reaction guanosine(527) in 16S rRNA + S-adenosyl-L-methionine = N(7)-methylguanosine(527) in 16S rRNA + S-adenosyl-L-homocysteine. Its function is as follows. Specifically methylates the N7 position of guanine in position 527 of 16S rRNA. This chain is Ribosomal RNA small subunit methyltransferase G, found in Cronobacter sakazakii (strain ATCC BAA-894) (Enterobacter sakazakii).